The primary structure comprises 184 residues: UPF0149 protein Pmen_0324 (184 aa).

Belongs to the UPF0149 family.

This is UPF0149 protein Pmen_0324 from Ectopseudomonas mendocina (strain ymp) (Pseudomonas mendocina).